We begin with the raw amino-acid sequence, 265 residues long: Pre-protein VI (265 aa).

Residues 1-33 (MEDINFSSLAPRHGTRPYMGTWNEIGTSQLNGG) constitute a propeptide that is removed on maturation. Positions 34 to 54 (AFNWNSIWSGLKNFGSTIKTY) are amphipathic alpha-helix essential for membrane lytic activity. Residues 36–53 (NWNSIWSGLKNFGSTIKT) form an involved in endosomal membrane lysis region. The tract at residues 48–74 (GSTIKTYGTKAWNSQTGQMLRDKLKDQ) is interaction with hexon protein. Positions 67 to 76 (LRDKLKDQNF) match the Nuclear export signal motif. The interval 123–155 (LETVPGSVPTKGEKRPRPDAEETLVTHTTEPPS) is disordered. Basic and acidic residues predominate over residues 133–142 (KGEKRPRPDA). Positions 136–140 (KRPRP) match the Nuclear localization signal motif. Threonine 148 carries the post-translational modification Phosphothreonine; by host. Residues 153–156 (PPSY) carry the PPXY motif motif. Positions 246 to 257 (STLNSIVGLGVK) match the Nuclear export signal motif. The interval 248-254 (LNSIVGL) is interaction with hexon protein. A binds to importin alpha/beta, involved in hexon nuclear import region spans residues 255-265 (GVKSLKRRRCY). A Nuclear localization signal motif is present at residues 260–263 (KRRR).

The protein belongs to the adenoviridae protein VI family. As to quaternary structure, interacts with hexon protein; this interaction allows nuclear import of hexon trimers and possibly pre-capsid assembly. Interacts (via C-terminal NLS) with importin alpha/beta. Interacts (via PPxY motif) with host NEDD4 ubiquitine ligase; this interaction might play a role in virus intracellular transport during entry. Part of a complex composed of the core-capsid bridging protein, the endosome lysis protein VI and the hexon-linking protein VIII; these interactions bridge the virus core to the capsid. Interacts with peripentonal hexons; this interaction stabilizes the capsid by gluing two peripentonal hexons together and joining them with an adjacent group-of-nine hexon. In terms of assembly, heterodimer with the viral protease; disulfide-linked. Interacts with the viral protease. Ubiquitinated by Nedd4 following partial capsid disassembly; which might play a role in intracellular virus movement during entry. In terms of processing, contains the major nuclear import and export signals. Proteolytically removed during virion maturation. The processing of the C-terminus turns the precursor into a mature viral structural protein and abrogates its ability to promote hexon import and act as a potential chaperone protein.

It is found in the host nucleus. Its subcellular location is the host cytoplasm. The protein resides in the virion. In terms of biological role, during virus assembly, promotes hexon trimers nuclear import through nuclear pore complexes via an importin alpha/beta-dependent mechanism. By analogy to herpesviruses capsid assembly, might act as a chaperone to promote the formation of the icosahedral capsid. Functionally, structural component of the virion that provides increased stability to the particle shell through its interaction with the core-capsid bridging protein and the hexon-linking protein VIII. Fibers shedding during virus entry into host cell allows the endosome lysis protein to be exposed as a membrane-lytic peptide. Exhibits pH-independent membrane fragmentation activity and probably mediates viral rapid escape from host endosome via organellar membrane lysis. It is not clear if it then remains partially associated with the capsid and involved in the intracellular microtubule-dependent transport of capsid to the nucleus, or if it is lost during endosomal penetration. Its function is as follows. Cofactor that activates the viral protease. Binds to viral protease in a 1:1 ratio. The protein is Pre-protein VI of Human adenovirus A serotype 12 (HAdV-12).